The following is a 248-amino-acid chain: Transcription factor Spi-C (248 aa).

Residues 111 to 194 (LRLFEYLHES…IRRKLTYQFS (84 aa)) constitute a DNA-binding region (ETS).

Belongs to the ETS family. As to quaternary structure, binds DNA as a monomer.

Its subcellular location is the nucleus. Its function is as follows. Controls the development of red pulp macrophages required for red blood cells recycling and iron homeostasis. Transcription factor that binds to the PU-box, a purine-rich DNA sequence (5'-GAGGA[AT]-3') that can act as a lymphoid-specific enhancer. Regulates VCAM1 gene expression. In Bos taurus (Bovine), this protein is Transcription factor Spi-C (SPIC).